A 132-amino-acid polypeptide reads, in one-letter code: Small ribosomal subunit protein uS8 (132 aa).

This sequence belongs to the universal ribosomal protein uS8 family. As to quaternary structure, part of the 30S ribosomal subunit. Contacts proteins S5 and S12.

Functionally, one of the primary rRNA binding proteins, it binds directly to 16S rRNA central domain where it helps coordinate assembly of the platform of the 30S subunit. The sequence is that of Small ribosomal subunit protein uS8 from Levilactobacillus brevis (strain ATCC 367 / BCRC 12310 / CIP 105137 / JCM 1170 / LMG 11437 / NCIMB 947 / NCTC 947) (Lactobacillus brevis).